The chain runs to 335 residues: MGKNIKIAFKHVSKEYDLYQNKSDKIKGLFMPKSQKMQSFWALRDVSFDIHDGETVGLIGINGSGKSTISSIMSGVIPPTQGEVVINGETSLIAIAVGLKGPLTGYENIRLKLLMHGMKSSQINKLMPSIIEFADIGDFINQPIKNYSSGMRSRLGFAISVHTNPDILVIDEALSVGDQTFYEKCVNKINEFKARGKTIVFVSHSLGQVKSLCDRIIWMHHGEIREMGEAKEVAQKYDEFVKWFNKQPNDYKKKYQKEHKEHQKAPQKKVYPNPNANKYRLTLFDKFLLTALIVLTILFGTLVATGKSFKGLISETSTNQVEQIAYVDNNEITIR.

The ABC transporter domain maps to 26–246 (IKGLFMPKSQ…YDEFVKWFNK (221 aa)). Position 60–67 (60–67 (GINGSGKS)) interacts with ATP.

The protein belongs to the ABC transporter superfamily. Teichoic acids exporter (TC 3.A.1.104.1) family. In terms of assembly, the complex is composed of two ATP-binding proteins (TagH) and two transmembrane proteins (TagG).

The protein localises to the cell membrane. It catalyses the reaction ATP + H2O + teichoic acidSide 1 = ADP + phosphate + teichoic acidSide 2.. Functionally, part of the ABC transporter complex TagGH involved in teichoic acids export. Responsible for energy coupling to the transport system. In Listeria innocua serovar 6a (strain ATCC BAA-680 / CLIP 11262), this protein is Teichoic acids export ATP-binding protein TagH.